Consider the following 210-residue polypeptide: Mitochondrial import receptor subunit TOM20-2 (210 aa).

M1 carries the post-translational modification N-acetylmethionine. Topologically, residues 1–178 (MEFSTADFER…SSKKKKRNTE (178 aa)) are cytoplasmic. 2 TPR repeats span residues 42-75 (LLEL…NPGK) and 83-120 (ANAY…DPGN). The segment covering 151-161 (GGGGGGGGGGM) has biased composition (gly residues). The interval 151-172 (GGGGGGGGGGMASSNVSQSSKK) is disordered. The chain crosses the membrane as a helical span at residues 179–199 (FTYDVCGWIILACGIVAWVGM). Over 200–210 (AKSLGPPPPAR) the chain is Mitochondrial intermembrane.

Belongs to the Tom20 family. Forms part of the preprotein translocase complex of the outer mitochondrial membrane (TOM complex) which consists of at least 6 different proteins (TOM5, TOM6, TOM7, TOM20, TOM22/TOM9 and TOM40). Component of a mitochondrial large protein complex that contains, at least, MIC60, DGS1, TOM40, TOM20 proteins, and petC/RISP. The N-terminus is blocked. Expressed in roots, flowers, young cotyledons and leaves.

The protein localises to the mitochondrion outer membrane. Functionally, central component of the receptor complex responsible for the recognition and translocation of cytosolically synthesized mitochondrial preproteins. Together with TOM22 functions as the transit peptide receptor at the surface of the mitochondrion outer membrane and facilitates the movement of preproteins into the translocation pore. The sequence is that of Mitochondrial import receptor subunit TOM20-2 from Arabidopsis thaliana (Mouse-ear cress).